We begin with the raw amino-acid sequence, 110 residues long: Insulin (110 aa).

Residues 1–24 (MALWMRLLPLLALLALWGPDPAAA) form the signal peptide. 3 disulfide bridges follow: cysteine 31–cysteine 96, cysteine 43–cysteine 109, and cysteine 95–cysteine 100. Residues 57–87 (EAEDLQVGQVELGGGPGAGSLQPLALEGSLQ) constitute a propeptide, c peptide.

The protein belongs to the insulin family. Heterodimer of a B chain and an A chain linked by two disulfide bonds.

It localises to the secreted. In terms of biological role, insulin decreases blood glucose concentration. It increases cell permeability to monosaccharides, amino acids and fatty acids. It accelerates glycolysis, the pentose phosphate cycle, and glycogen synthesis in liver. The protein is Insulin (INS) of Gorilla gorilla gorilla (Western lowland gorilla).